A 179-amino-acid polypeptide reads, in one-letter code: Nicotinamide-nucleotide adenylyltransferase (179 aa).

The protein belongs to the archaeal NMN adenylyltransferase family.

It localises to the cytoplasm. The enzyme catalyses beta-nicotinamide D-ribonucleotide + ATP + H(+) = diphosphate + NAD(+). It participates in cofactor biosynthesis; NAD(+) biosynthesis; NAD(+) from nicotinamide D-ribonucleotide: step 1/1. The protein is Nicotinamide-nucleotide adenylyltransferase of Thermoplasma acidophilum (strain ATCC 25905 / DSM 1728 / JCM 9062 / NBRC 15155 / AMRC-C165).